A 124-amino-acid polypeptide reads, in one-letter code: Ribonuclease pancreatic (124 aa).

The segment covering 1-13 (KESAAAKFERQHM) has biased composition (basic and acidic residues). Residues 1–24 (KESAAAKFERQHMDSSTSSASSSN) are disordered. Lys7 and Arg10 together coordinate substrate. The active-site Proton acceptor is His12. Cystine bridges form between Cys26/Cys84, Cys40/Cys95, Cys58/Cys110, and Cys65/Cys72. Substrate is bound by residues 41–45 (KPVNT), Lys66, and Arg85. Catalysis depends on His119, which acts as the Proton donor.

The protein belongs to the pancreatic ribonuclease family. Monomer. Interacts with and forms tight 1:1 complexes with RNH1. Dimerization of two such complexes may occur. Interaction with RNH1 inhibits this protein. In terms of tissue distribution, pancreas.

The protein resides in the secreted. It carries out the reaction an [RNA] containing cytidine + H2O = an [RNA]-3'-cytidine-3'-phosphate + a 5'-hydroxy-ribonucleotide-3'-[RNA].. It catalyses the reaction an [RNA] containing uridine + H2O = an [RNA]-3'-uridine-3'-phosphate + a 5'-hydroxy-ribonucleotide-3'-[RNA].. Functionally, endonuclease that catalyzes the cleavage of RNA on the 3' side of pyrimidine nucleotides. Acts on single-stranded and double-stranded RNA. The sequence is that of Ribonuclease pancreatic (RNASE1) from Connochaetes taurinus (Blue wildebeest).